The primary structure comprises 495 residues: UDP-N-acetylmuramate--L-alanine ligase (495 aa).

120-126 (GSHGKTT) is an ATP binding site.

The protein belongs to the MurCDEF family.

It is found in the cytoplasm. The enzyme catalyses UDP-N-acetyl-alpha-D-muramate + L-alanine + ATP = UDP-N-acetyl-alpha-D-muramoyl-L-alanine + ADP + phosphate + H(+). It functions in the pathway cell wall biogenesis; peptidoglycan biosynthesis. Its function is as follows. Cell wall formation. This is UDP-N-acetylmuramate--L-alanine ligase from Rickettsia prowazekii (strain Madrid E).